Consider the following 98-residue polypeptide: Beta-elicitin MGM-beta (98 aa).

3 cysteine pairs are disulfide-bonded: Cys3–Cys71, Cys27–Cys56, and Cys51–Cys95.

This sequence belongs to the elicitin family.

Its subcellular location is the secreted. Functionally, induces local and distal defense responses (incompatible hypersensitive reaction) in plants from the solanaceae and cruciferae families. Elicits leaf necrosis and causes the accumulation of pathogenesis-related proteins. Might interact with the lipidic molecules of the plasma membrane. This chain is Beta-elicitin MGM-beta, found in Phytophthora megasperma (Potato pink rot fungus).